The chain runs to 780 residues: WD repeat-containing protein 27 (780 aa).

WD repeat units lie at residues 3–56 (TPPE…VWSS), 61–100 (HQLLTLQGHHQLITAVVFGNQIDPLLLCSASEDYIIMWNV), 111–150 (LTPRGTILGSLLQTVLCLRFSLDDRAIAVCAGNKISVMDV), 154–193 (SVLVELKGHQGSVTAVEFCPWQAHTLISVSEDRSFKVWDF), 200–236 (YSSSILTAYPLLNLLINEENQQLVTGSADGQLWIFSL), 291–335 (FPIL…LASF), 342–385 (HFKE…VLEI), 500–540 (NLSR…VFNA), 544–582 (GPPAAFSGHDGAVSTICWSHDKRWLLSTGRDRTLRVWSV), 588–639 (MLLL…RYKP), 644–685 (KPIF…VFDL), 691–738 (AAVL…LWDL), and 752–779 (AFCTVLQDTQIRLLKWPSTQQLLSLSQP).

The protein is WD repeat-containing protein 27 (Wdr27) of Mus musculus (Mouse).